The chain runs to 427 residues: 3-phosphoshikimate 1-carboxyvinyltransferase (427 aa).

3-phosphoshikimate is bound by residues lysine 22, serine 23, and arginine 27. Lysine 22 is a phosphoenolpyruvate binding site. The phosphoenolpyruvate site is built by glycine 96 and arginine 124. 3-phosphoshikimate-binding residues include serine 169, serine 170, glutamine 171, serine 197, aspartate 313, asparagine 336, and lysine 340. Phosphoenolpyruvate is bound at residue glutamine 171. Aspartate 313 acts as the Proton acceptor in catalysis. Residues arginine 344, arginine 386, and lysine 411 each contribute to the phosphoenolpyruvate site.

The protein belongs to the EPSP synthase family. Monomer.

Its subcellular location is the cytoplasm. The catalysed reaction is 3-phosphoshikimate + phosphoenolpyruvate = 5-O-(1-carboxyvinyl)-3-phosphoshikimate + phosphate. It functions in the pathway metabolic intermediate biosynthesis; chorismate biosynthesis; chorismate from D-erythrose 4-phosphate and phosphoenolpyruvate: step 6/7. Functionally, catalyzes the transfer of the enolpyruvyl moiety of phosphoenolpyruvate (PEP) to the 5-hydroxyl of shikimate-3-phosphate (S3P) to produce enolpyruvyl shikimate-3-phosphate and inorganic phosphate. This is 3-phosphoshikimate 1-carboxyvinyltransferase from Klebsiella pneumoniae subsp. pneumoniae (strain ATCC 700721 / MGH 78578).